Reading from the N-terminus, the 1140-residue chain is uncharacterized protein (1140 aa).

Disordered stretches follow at residues 1–49, 97–243, 280–427, 512–541, 702–747, 916–1059, and 1080–1103; these read MGSS…TSPE, SSDI…STIS, TSSS…KSSV, ASSTLGSKVSSSNSRMATSKTSSTSSDLSK, FSTP…STAS, CPEK…PIGR, and LSSSTEKVNRSTTKPTAAIHGTSS. The segment covering 105 to 129 has biased composition (polar residues); it reads VNDVESSTSGPSNSYSALSSTNAQL. Composition is skewed to low complexity over residues 130 to 154, 172 to 214, and 221 to 243; these read SSSTTETDSISSSAIQTSSPQTSSS, TTAS…TTSD, and SSSTSDVSSLLSSTSSPASSTIS. Positions 516–528 are enriched in polar residues; it reads LGSKVSSSNSRMA. Low complexity-rich tracts occupy residues 529–541 and 703–718; these read TSKTSSTSSDLSK and STPESSPTTSTLVTSE. Residues 719–733 show a composition bias toward polar residues; sequence APSTVSSMTTSAPFI. Over residues 734–747 the composition is skewed to low complexity; that stretch reads NNSTSARPSPSTAS. The span at 949–961 shows a compositional bias: basic and acidic residues; it reads SFKDMKTSQETKK. Positions 977–997 are enriched in low complexity; the sequence is EKTSPTTKASPSTSPSESKAA. 3 stretches are compositionally biased toward polar residues: residues 998–1023, 1031–1055, and 1089–1103; these read GNTSVATNASPSTSPSESQGTGSTSV, TKNSEGVSTTKAKNTSTVAKSSTES, and RSTTKPTAAIHGTSS.

This is an uncharacterized protein from Saccharomyces cerevisiae (strain ATCC 204508 / S288c) (Baker's yeast).